The following is a 249-amino-acid chain: DNA repair protein RecO (249 aa).

This sequence belongs to the RecO family.

Involved in DNA repair and RecF pathway recombination. This is DNA repair protein RecO from Lactobacillus delbrueckii subsp. bulgaricus (strain ATCC BAA-365 / Lb-18).